We begin with the raw amino-acid sequence, 533 residues long: Portal protein B (533 aa).

It belongs to the siphoviridae portal protein family. Homododecamer. Interacts with the terminase complex composed of two small and one large terminase subunits. Proteolytically cleaved by the viral protease during capsid maturation.

It is found in the virion. In terms of biological role, forms the portal vertex of the capsid. This portal plays critical roles in head assembly, genome packaging, neck/tail attachment, and genome ejection. The portal protein multimerizes as a single ring-shaped homododecamer arranged around a central channel. Binds to the terminase subunits to form the packaging machine. The polypeptide is Portal protein B (Escherichia phage lambda (Bacteriophage lambda)).